We begin with the raw amino-acid sequence, 121 residues long: Large ribosomal subunit protein bL12 (121 aa).

Belongs to the bacterial ribosomal protein bL12 family. In terms of assembly, homodimer. Part of the ribosomal stalk of the 50S ribosomal subunit. Forms a multimeric L10(L12)X complex, where L10 forms an elongated spine to which 2 to 4 L12 dimers bind in a sequential fashion. Binds GTP-bound translation factors.

In terms of biological role, forms part of the ribosomal stalk which helps the ribosome interact with GTP-bound translation factors. Is thus essential for accurate translation. In Enterobacter sp. (strain 638), this protein is Large ribosomal subunit protein bL12.